The chain runs to 133 residues: MTASFALVLLLGGVAVCIATGVFGGYSEKANHQANPEYLNLAHYATSTWSAQQPGKTHFDTVVEVLKVETQTVAGTNYRLTLKVAESTCELTSTYNKDTCLPKADVAQRTCTTVVCESLRGDKFVSSFECAAA.

The N-terminal stretch at 1 to 19 is a signal peptide; sequence MTASFALVLLLGGVAVCIA. Residues 29 to 115 form the Cystatin domain; the sequence is KANHQANPEY…VAQRTCTTVV (87 aa).

This sequence belongs to the cystatin family. In terms of tissue distribution, salivary gland.

Its subcellular location is the secreted. In terms of biological role, inhibitor of cysteine proteinases. Inhibits host cathepsin L (CTSL) and S (CTSS). Modulates production of various cytokines and chemokines in lipopolysaccharide (LPS)-stimulated mouse dendritic cell. Suppresses maturation of mouse bone-marrow-derived dendritic cells (BMDCs). This is Salivary cystatin-L from Ixodes persulcatus (Taiga tick).